A 185-amino-acid chain; its full sequence is Ribosome-recycling factor (185 aa).

This sequence belongs to the RRF family.

The protein localises to the cytoplasm. Functionally, responsible for the release of ribosomes from messenger RNA at the termination of protein biosynthesis. May increase the efficiency of translation by recycling ribosomes from one round of translation to another. This Haemophilus influenzae (strain 86-028NP) protein is Ribosome-recycling factor.